A 366-amino-acid chain; its full sequence is 1-deoxy-D-xylulose 5-phosphate reductoisomerase (366 aa).

NADPH-binding residues include Thr-7, Gly-8, Ser-9, Ile-10, Gly-31, Asn-33, and Asn-111. Residue Lys-112 coordinates 1-deoxy-D-xylulose 5-phosphate. Glu-113 is a binding site for NADPH. Residue Asp-131 coordinates Mn(2+). Positions 132, 133, 162, and 185 each coordinate 1-deoxy-D-xylulose 5-phosphate. Glu-133 contributes to the Mn(2+) binding site. Gly-191 lines the NADPH pocket. 4 residues coordinate 1-deoxy-D-xylulose 5-phosphate: Ser-198, Asn-203, Lys-204, and Glu-207. Mn(2+) is bound at residue Glu-207.

Belongs to the DXR family. The cofactor is Mg(2+). Mn(2+) serves as cofactor.

The catalysed reaction is 2-C-methyl-D-erythritol 4-phosphate + NADP(+) = 1-deoxy-D-xylulose 5-phosphate + NADPH + H(+). It participates in isoprenoid biosynthesis; isopentenyl diphosphate biosynthesis via DXP pathway; isopentenyl diphosphate from 1-deoxy-D-xylulose 5-phosphate: step 1/6. Functionally, catalyzes the NADPH-dependent rearrangement and reduction of 1-deoxy-D-xylulose-5-phosphate (DXP) to 2-C-methyl-D-erythritol 4-phosphate (MEP). The sequence is that of 1-deoxy-D-xylulose 5-phosphate reductoisomerase from Nautilia profundicola (strain ATCC BAA-1463 / DSM 18972 / AmH).